Here is a 294-residue protein sequence, read N- to C-terminus: Xyloglucan endotransglucosylase protein 34 (294 aa).

A signal peptide spans M1–G22. One can recognise a GH16 domain in the interval A23 to Y221. E107 serves as the catalytic Nucleophile. The active-site Proton donor is E111. Position 111 (E111) interacts with xyloglucan. A glycan (N-linked (GlcNAc...) asparagine) is linked at N115. Residues Q124–N126, D134–E136, D200–W201, and G205 contribute to the xyloglucan site. 2 disulfides stabilise this stretch: C229–C238 and C275–C288. Xyloglucan is bound at residue R280.

It belongs to the glycosyl hydrolase 16 family. XTH group 1 subfamily. In terms of processing, contains at least one intrachain disulfide bond essential for its enzymatic activity. Post-translationally, N-glycosylated. Contains N-acetylglucosamine and mannose. Glycosylation is not essential for its catalytic activity. In terms of tissue distribution, expressed in mature gelatinous (G) cell wall layer of the tension wood fibers. Highly expressed in the outer zone of the G layer close to the secondary S2 layer. Not expressed in the mature walls of the ray cells or vessel elements (at protein level). Highest expression in both the phloem/cambium and differentiating xylem of the mature stem containing primarily secondary cell wall forming cells, in root tips and young roots. Expressed at low levels in apical bud.

It is found in the secreted. It localises to the cell wall. Its subcellular location is the extracellular space. The protein localises to the apoplast. The protein resides in the cytoplasm. The enzyme catalyses breaks a beta-(1-&gt;4) bond in the backbone of a xyloglucan and transfers the xyloglucanyl segment on to O-4 of the non-reducing terminal glucose residue of an acceptor, which can be a xyloglucan or an oligosaccharide of xyloglucan.. Functionally, catalyzes xyloglucan endotransglycosylation (XET). Cleaves and religates xyloglucan polymers. Does not catalyze xyloglucan endohydrolysis (XEH). Involved in early phases of secondary (S) cell wall formation in fibers of the xylem and phloem vascular tissues of wood stems. May play a role in restructuring primary cell walls, possibly creating and reinforcing the connections between the primary and S cell wall layers. Functions in the gelatinous (G) layers of the tension wood fibers that are involved in bending of the wood stems. May play a role in G fiber shrinking by repairing broken xyloglucan cross-links between G and S2 cell wall layers via its XET activity to maintain connections between the layers. In Populus tremula x Populus tremuloides (Hybrid aspen), this protein is Xyloglucan endotransglucosylase protein 34.